We begin with the raw amino-acid sequence, 223 residues long: Thiamine-phosphate synthase (223 aa).

4-amino-2-methyl-5-(diphosphooxymethyl)pyrimidine-binding positions include 42 to 46 (QLRDK) and N83. 2 residues coordinate Mg(2+): D84 and D103. Residue S122 participates in 4-amino-2-methyl-5-(diphosphooxymethyl)pyrimidine binding. 148–150 (TPT) lines the 2-[(2R,5Z)-2-carboxy-4-methylthiazol-5(2H)-ylidene]ethyl phosphate pocket. A 4-amino-2-methyl-5-(diphosphooxymethyl)pyrimidine-binding site is contributed by K151. Residue G179 coordinates 2-[(2R,5Z)-2-carboxy-4-methylthiazol-5(2H)-ylidene]ethyl phosphate.

Belongs to the thiamine-phosphate synthase family. Requires Mg(2+) as cofactor.

It carries out the reaction 2-[(2R,5Z)-2-carboxy-4-methylthiazol-5(2H)-ylidene]ethyl phosphate + 4-amino-2-methyl-5-(diphosphooxymethyl)pyrimidine + 2 H(+) = thiamine phosphate + CO2 + diphosphate. The catalysed reaction is 2-(2-carboxy-4-methylthiazol-5-yl)ethyl phosphate + 4-amino-2-methyl-5-(diphosphooxymethyl)pyrimidine + 2 H(+) = thiamine phosphate + CO2 + diphosphate. It catalyses the reaction 4-methyl-5-(2-phosphooxyethyl)-thiazole + 4-amino-2-methyl-5-(diphosphooxymethyl)pyrimidine + H(+) = thiamine phosphate + diphosphate. It functions in the pathway cofactor biosynthesis; thiamine diphosphate biosynthesis; thiamine phosphate from 4-amino-2-methyl-5-diphosphomethylpyrimidine and 4-methyl-5-(2-phosphoethyl)-thiazole: step 1/1. Its function is as follows. Condenses 4-methyl-5-(beta-hydroxyethyl)thiazole monophosphate (THZ-P) and 2-methyl-4-amino-5-hydroxymethyl pyrimidine pyrophosphate (HMP-PP) to form thiamine monophosphate (TMP). The protein is Thiamine-phosphate synthase of Mycolicibacterium paratuberculosis (strain ATCC BAA-968 / K-10) (Mycobacterium paratuberculosis).